The chain runs to 736 residues: MKRAADGMEKPKFLTREEREKLALERRQAAVTDQRRSALDLLQSLPRPPPPPPPPLSNPPRDSSSSHHRDSSDRDRDRDRDRDRDRDRDRDRERRRDDDSRRDRDRDRDRDRGDSSRRDRDRERGDRDRDRDRERGDRDRERGDREKDRLEKMAEREREKELDAIKEQYLGSKKPKKRVIKPSEKFRFSFDWENTEDTSRDMNSLYQSPHEARLLYGRGFLAGIDRREQKKVAAAHEKETRAEQRRKAGLDDRPEDDAVDKKEADAAAKYDAFDMRVDRHWTQKSLDEMTERDWRIFREDFNISYKGSKVPRPMRKWSESKLGTELLRAVEKAGYKEPSPIQMASIPLGLQQRDVIGIAETGSGKTAAFVLPMLSYITRLPPISEENEAEGPYAVVMAPTRELAQQIEEETVKFATYLGIKVVSIVGGQSIEEQGFKIRQGCEVVIATPGRLLDCLERRYAVLNQCNYVVLDEADRMIDMGFEPQVVGVLDAMPSSNLKPENEDEELDAKTIYRTTYMFSATMPPAVERLARKYLRNPVVVTIGTAGKATDLITQNVIMTKESEKMSRLQKILTDLGDKPAIVFCNTKKSADARAKDLDKAGFRVTTLHGGKSQEQRETSLDGFRNRRFTVLVATDVAGRGIDIPDVAHVINYEMPSSIDTYTHRIGRTGRAGKKGLATSFLTLENTDIFFDLKQMLIQSNSPVPPELARHEASKFKPGSVPDRPPRRNDTVYATH.

Positions 14 to 38 (LTREEREKLALERRQAAVTDQRRSA) form a coiled coil. Positions 25-38 (ERRQAAVTDQRRSA) are enriched in basic and acidic residues. 2 disordered regions span residues 25 to 178 (ERRQ…PKKR) and 231 to 263 (KVAAAHEKETRAEQRRKAGLDDRPEDDAVDKKE). Over residues 46-58 (PRPPPPPPPPLSN) the composition is skewed to pro residues. 2 stretches are compositionally biased toward basic and acidic residues: residues 64–166 (SSSH…DAIK) and 231–252 (KVAAAHEKETRAEQRRKAGLDD). A coiled-coil region spans residues 137 to 167 (DRDRERGDREKDRLEKMAEREREKELDAIKE). The Q motif motif lies at 315 to 343 (RKWSESKLGTELLRAVEKAGYKEPSPIQM). Residues 346–541 (IPLGLQQRDV…RKYLRNPVVV (196 aa)) form the Helicase ATP-binding domain. An ATP-binding site is contributed by 359-366 (AETGSGKT). A DEAD box motif is present at residues 472-475 (DEAD). The 145-residue stretch at 568-712 (RLQKILTDLG…PVPPELARHE (145 aa)) folds into the Helicase C-terminal domain. The tract at residues 704-736 (VPPELARHEASKFKPGSVPDRPPRRNDTVYATH) is disordered.

The protein belongs to the DEAD box helicase family. DDX23/PRP28 subfamily.

It is found in the cytoplasm. It localises to the nucleus. The enzyme catalyses ATP + H2O = ADP + phosphate + H(+). Functionally, ATP-dependent RNA helicase involved in mRNA splicing. May destabilize the U1/5'-splice site duplex to permit an effective competition for the 5'-splice site by the U6 snRNA, resulting in the switch between U1 and U6 at the 5'-splice site. May also act to unwind the U4/U6 base-pairing interaction in the U4/U6/U5 snRNP, facilitating the first covalent step of splicing. In Oryza sativa subsp. japonica (Rice), this protein is DEAD-box ATP-dependent RNA helicase 21.